A 318-amino-acid polypeptide reads, in one-letter code: D-alanine--D-alanine ligase B (318 aa).

The 199-residue stretch at 117–315 (KQVWLSLGLS…FEALVWRVLE (199 aa)) folds into the ATP-grasp domain. 146-201 (AEQIGLPVIVKPANEGSSVGVSRVFDQAQLDEAVTLAARYDGALLMEQLIEGDELT) is a binding site for ATP. Residues Asp-268, Glu-282, and Asn-284 each contribute to the Mg(2+) site.

The protein belongs to the D-alanine--D-alanine ligase family. The cofactor is Mg(2+). It depends on Mn(2+) as a cofactor.

Its subcellular location is the cytoplasm. The enzyme catalyses 2 D-alanine + ATP = D-alanyl-D-alanine + ADP + phosphate + H(+). It functions in the pathway cell wall biogenesis; peptidoglycan biosynthesis. Cell wall formation. The sequence is that of D-alanine--D-alanine ligase B from Xanthomonas campestris pv. campestris (strain ATCC 33913 / DSM 3586 / NCPPB 528 / LMG 568 / P 25).